The following is a 202-amino-acid chain: Imidazoleglycerol-phosphate dehydratase (202 aa).

Belongs to the imidazoleglycerol-phosphate dehydratase family.

It localises to the cytoplasm. It catalyses the reaction D-erythro-1-(imidazol-4-yl)glycerol 3-phosphate = 3-(imidazol-4-yl)-2-oxopropyl phosphate + H2O. The protein operates within amino-acid biosynthesis; L-histidine biosynthesis; L-histidine from 5-phospho-alpha-D-ribose 1-diphosphate: step 6/9. The polypeptide is Imidazoleglycerol-phosphate dehydratase (Parasynechococcus marenigrum (strain WH8102)).